A 303-amino-acid chain; its full sequence is Serine/threonine-protein phosphatase PP-X homolog 1 (303 aa).

Mn(2+) contacts are provided by aspartate 51, histidine 53, aspartate 79, and asparagine 111. Histidine 112 acts as the Proton donor in catalysis. Mn(2+)-binding residues include histidine 161 and histidine 235.

It belongs to the PPP phosphatase family. PP-4 (PP-X) subfamily. Mn(2+) serves as cofactor.

The enzyme catalyses O-phospho-L-seryl-[protein] + H2O = L-seryl-[protein] + phosphate. The catalysed reaction is O-phospho-L-threonyl-[protein] + H2O = L-threonyl-[protein] + phosphate. The chain is Serine/threonine-protein phosphatase PP-X homolog 1 (Ppx1) from Paramecium tetraurelia.